A 191-amino-acid chain; its full sequence is Photosystem I assembly protein Ycf4 (191 aa).

A run of 2 helical transmembrane segments spans residues 34 to 54 and 68 to 88; these read VASM…SSYF and IFVP…LLAI.

It belongs to the Ycf4 family.

The protein resides in the cellular thylakoid membrane. Functionally, seems to be required for the assembly of the photosystem I complex. The chain is Photosystem I assembly protein Ycf4 from Prochlorococcus marinus (strain NATL1A).